Consider the following 122-residue polypeptide: Serum amyloid A-3 protein (122 aa).

The signal sequence occupies residues 1–18 (MKPSIAIILCILILGVDS). Positions 87 to 122 (TGHGAEDSRADQFANEWGRSGKDPNHFRPAGLPKRY) are disordered.

The protein belongs to the SAA family. In terms of tissue distribution, found in various tissues.

The protein localises to the secreted. Its function is as follows. Major acute phase reactant. Apolipoprotein of the HDL complex. In vitro exhibits antimicrobial activity against Escherichia coli, Streptococcus uberis and Pseudomonas aeruginosa. This Mus musculus (Mouse) protein is Serum amyloid A-3 protein (Saa3).